The chain runs to 303 residues: Ribonucleoside-diphosphate reductase small subunit (303 aa).

Residues D60, E90, and H93 each coordinate Fe cation. The active site involves Y97. Residues 147-167 traverse the membrane as a helical segment; it reads LLMILIEGIFFASSFASISYL. E153, E187, and H190 together coordinate Fe cation.

It belongs to the ribonucleoside diphosphate reductase small chain family. Heterotetramer composed of a homodimer of the large subunit (R1) and a homodimer of the small subunit (R2). Larger multisubunit protein complex are also active, composed of (R1)n(R2)n. It depends on Fe cation as a cofactor.

Its subcellular location is the host membrane. The catalysed reaction is a 2'-deoxyribonucleoside 5'-diphosphate + [thioredoxin]-disulfide + H2O = a ribonucleoside 5'-diphosphate + [thioredoxin]-dithiol. Its function is as follows. Ribonucleoside-diphosphate reductase holoenzyme provides the precursors necessary for viral DNA synthesis. Allows virus growth in non-dividing cells, as well as reactivation from latency in infected hosts. Catalyzes the biosynthesis of deoxyribonucleotides from the corresponding ribonucleotides. The sequence is that of Ribonucleoside-diphosphate reductase small subunit from Suid herpesvirus 1 (strain Kaplan) (SuHV-1).